We begin with the raw amino-acid sequence, 112 residues long: uncharacterized protein (112 aa).

It to M.jannaschii MJ1244 and M.thermoautotrophicum MTH1110.

This is an uncharacterized protein from Methanocaldococcus jannaschii (strain ATCC 43067 / DSM 2661 / JAL-1 / JCM 10045 / NBRC 100440) (Methanococcus jannaschii).